The chain runs to 111 residues: uncharacterized protein (111 aa).

Transmembrane regions (helical) follow at residues 29-49 (LLNF…ATAV) and 52-72 (ACFA…YLLA).

It localises to the membrane. This is an uncharacterized protein from Saccharomyces cerevisiae (strain ATCC 204508 / S288c) (Baker's yeast).